A 273-amino-acid polypeptide reads, in one-letter code: Dermonecrotic toxin LsaSicTox-alphaIB1bii (273 aa).

His-5 is an active-site residue. Residues Glu-25 and Asp-27 each contribute to the Mg(2+) site. His-41 functions as the Nucleophile in the catalytic mechanism. Intrachain disulfides connect Cys-45–Cys-51 and Cys-47–Cys-190. Asp-85 provides a ligand contact to Mg(2+).

It belongs to the arthropod phospholipase D family. Class II subfamily. Mg(2+) serves as cofactor. In terms of tissue distribution, expressed by the venom gland.

It is found in the secreted. The catalysed reaction is an N-(acyl)-sphingosylphosphocholine = an N-(acyl)-sphingosyl-1,3-cyclic phosphate + choline. It catalyses the reaction an N-(acyl)-sphingosylphosphoethanolamine = an N-(acyl)-sphingosyl-1,3-cyclic phosphate + ethanolamine. The enzyme catalyses a 1-acyl-sn-glycero-3-phosphocholine = a 1-acyl-sn-glycero-2,3-cyclic phosphate + choline. It carries out the reaction a 1-acyl-sn-glycero-3-phosphoethanolamine = a 1-acyl-sn-glycero-2,3-cyclic phosphate + ethanolamine. Dermonecrotic toxins cleave the phosphodiester linkage between the phosphate and headgroup of certain phospholipids (sphingolipid and lysolipid substrates), forming an alcohol (often choline) and a cyclic phosphate. This toxin acts on sphingomyelin (SM). It may also act on ceramide phosphoethanolamine (CPE), lysophosphatidylcholine (LPC) and lysophosphatidylethanolamine (LPE), but not on lysophosphatidylserine (LPS), and lysophosphatidylglycerol (LPG). It acts by transphosphatidylation, releasing exclusively cyclic phosphate products as second products. Induces dermonecrosis, hemolysis, increased vascular permeability, edema, inflammatory response, and platelet aggregation. The polypeptide is Dermonecrotic toxin LsaSicTox-alphaIB1bii (Loxosceles sabina (Tucson recluse spider)).